Here is a 110-residue protein sequence, read N- to C-terminus: Early nodulin-12A (110 aa).

Positions 1-24 are cleaved as a signal peptide; sequence MASFFLSSLVLFLAALILVPQGLA. Positions 31–110 are disordered; that stretch reads VYEPPVNGPP…HPTEEHNIHF (80 aa). Residues 32–43 show a composition bias toward pro residues; the sequence is YEPPVNGPPVNK. 3 tandem repeats follow at residues 34 to 38, 39 to 43, and 44 to 48. The tract at residues 34–88 is 11 X 5 AA approximate tandem repeats of P-P-[VQRH]-[NKH]-[GKE]; sequence PPVNGPPVNKPPQKETPVHKPPQKETPVHKPPQKEPPRHKPPQKEPPRHKPPHKK. Residues 45 to 81 show a composition bias toward basic and acidic residues; the sequence is PQKETPVHKPPQKETPVHKPPQKEPPRHKPPQKEPPR. A 4; approximate repeat occupies 49–53; the sequence is TPVHK. Repeat unit 5 spans residues 54 to 58; it reads PPQKE. The 6; approximate repeat unit spans residues 59-63; sequence TPVHK. 5 repeat units span residues 64–68, 69–73, 74–78, 79–83, and 84–88. Residues 82-93 show a composition bias toward basic residues; it reads HKPPHKKSHLHV. Basic and acidic residues predominate over residues 101–110; that stretch reads HPTEEHNIHF.

It belongs to the plant proline-rich protein superfamily. ENOD12 family. As to expression, root nodules, stem and flower.

It is found in the secreted. Its subcellular location is the cell wall. Functionally, involved in the infection process during the plant-rhizobium interaction. The chain is Early nodulin-12A (ENOD12A) from Pisum sativum (Garden pea).